A 141-amino-acid chain; its full sequence is Envelope protein A28 homolog (141 aa).

Residues 1-21 (MNPTSIVLIVIATVAVCLIIM) traverse the membrane as a helical; Signal-anchor for type II membrane protein segment. Topologically, residues 22–141 (QIYYIYENYD…QDCIFLKSVI (120 aa)) are virion surface.

This sequence belongs to the poxviridae A28 protein family. Post-translationally, contains two intramolecular disulfide bonds. They are created by the viral disulfide bond formation pathway, a poxvirus-specific pathway that operates on the cytoplasmic side of the MV membranes.

It is found in the virion membrane. In terms of biological role, envelope protein required for virus entry into host cell and for cell-cell fusion (syncytium formation). The sequence is that of Envelope protein A28 homolog from Erythrocebus patas (Red guenon).